The primary structure comprises 249 residues: 5'-nucleotidase SurE (249 aa).

The a divalent metal cation site is built by aspartate 8, aspartate 9, serine 39, and asparagine 91.

This sequence belongs to the SurE nucleotidase family. A divalent metal cation is required as a cofactor.

The protein resides in the cytoplasm. The catalysed reaction is a ribonucleoside 5'-phosphate + H2O = a ribonucleoside + phosphate. In terms of biological role, nucleotidase that shows phosphatase activity on nucleoside 5'-monophosphates. The sequence is that of 5'-nucleotidase SurE from Magnetococcus marinus (strain ATCC BAA-1437 / JCM 17883 / MC-1).